Here is a 157-residue protein sequence, read N- to C-terminus: Endoribonuclease YbeY (157 aa).

Residues His-112, His-116, and His-122 each contribute to the Zn(2+) site.

Belongs to the endoribonuclease YbeY family. Zn(2+) is required as a cofactor.

Its subcellular location is the cytoplasm. Single strand-specific metallo-endoribonuclease involved in late-stage 70S ribosome quality control and in maturation of the 3' terminus of the 16S rRNA. The polypeptide is Endoribonuclease YbeY (Marinobacter nauticus (strain ATCC 700491 / DSM 11845 / VT8) (Marinobacter aquaeolei)).